Reading from the N-terminus, the 76-residue chain is Exodeoxyribonuclease 7 small subunit (76 aa).

Belongs to the XseB family. In terms of assembly, heterooligomer composed of large and small subunits.

The protein resides in the cytoplasm. The catalysed reaction is Exonucleolytic cleavage in either 5'- to 3'- or 3'- to 5'-direction to yield nucleoside 5'-phosphates.. Functionally, bidirectionally degrades single-stranded DNA into large acid-insoluble oligonucleotides, which are then degraded further into small acid-soluble oligonucleotides. The protein is Exodeoxyribonuclease 7 small subunit of Geobacter sulfurreducens (strain ATCC 51573 / DSM 12127 / PCA).